A 122-amino-acid polypeptide reads, in one-letter code: Large ribosomal subunit protein uL14 (122 aa).

Belongs to the universal ribosomal protein uL14 family. As to quaternary structure, part of the 50S ribosomal subunit. Forms a cluster with proteins L3 and L19. In the 70S ribosome, L14 and L19 interact and together make contacts with the 16S rRNA in bridges B5 and B8.

Its function is as follows. Binds to 23S rRNA. Forms part of two intersubunit bridges in the 70S ribosome. This Maricaulis maris (strain MCS10) (Caulobacter maris) protein is Large ribosomal subunit protein uL14.